The chain runs to 211 residues: Probable superoxide dismutase [Mn], mitochondrial (211 aa).

Mn(2+)-binding residues include His-36, His-84, Asp-173, and His-177.

Belongs to the iron/manganese superoxide dismutase family. As to quaternary structure, homotetramer. Mn(2+) is required as a cofactor.

The protein resides in the mitochondrion matrix. The enzyme catalyses 2 superoxide + 2 H(+) = H2O2 + O2. Destroys superoxide anion radicals which are normally produced within the cells and which are toxic to biological systems. This Debaryomyces hansenii (strain ATCC 36239 / CBS 767 / BCRC 21394 / JCM 1990 / NBRC 0083 / IGC 2968) (Yeast) protein is Probable superoxide dismutase [Mn], mitochondrial.